The following is a 274-amino-acid chain: ATP synthase subunit a (274 aa).

A run of 5 helical transmembrane segments spans residues 44–64 (VDSM…FYMV), 110–130 (FIWV…FPFI), 142–164 (IVPS…LILF), 212–232 (LFGN…LLPW), and 243–263 (AIFH…LTIV).

Belongs to the ATPase A chain family. As to quaternary structure, F-type ATPases have 2 components, CF(1) - the catalytic core - and CF(0) - the membrane proton channel. CF(1) has five subunits: alpha(3), beta(3), gamma(1), delta(1), epsilon(1). CF(0) has three main subunits: a(1), b(2) and c(9-12). The alpha and beta chains form an alternating ring which encloses part of the gamma chain. CF(1) is attached to CF(0) by a central stalk formed by the gamma and epsilon chains, while a peripheral stalk is formed by the delta and b chains.

The protein resides in the cell membrane. Its function is as follows. Key component of the proton channel; it plays a direct role in the translocation of protons across the membrane. The protein is ATP synthase subunit a of Buchnera aphidicola subsp. Acyrthosiphon pisum (strain APS) (Acyrthosiphon pisum symbiotic bacterium).